A 397-amino-acid polypeptide reads, in one-letter code: Mannonate dehydratase 2 (397 aa).

The protein belongs to the mannonate dehydratase family. The cofactor is Fe(2+). It depends on Mn(2+) as a cofactor.

The enzyme catalyses D-mannonate = 2-dehydro-3-deoxy-D-gluconate + H2O. Its pathway is carbohydrate metabolism; pentose and glucuronate interconversion. Catalyzes the dehydration of D-mannonate. In Agrobacterium fabrum (strain C58 / ATCC 33970) (Agrobacterium tumefaciens (strain C58)), this protein is Mannonate dehydratase 2 (uxuA2).